The following is a 641-amino-acid chain: Bifunctional protein glk (641 aa).

The disordered stretch occupies residues 1 to 21; the sequence is MSTGAQTKAAEASQHADGPRL. The segment at 1–340 is glucokinase; it reads MSTGAQTKAA…QLSNRTGGAS (340 aa). Position 23–28 (23–28) interacts with ATP; the sequence is ADVGGT. One can recognise an HTH rpiR-type domain in the interval 341–417; sequence SAVFERIRQM…LKLATGLTGT (77 aa). The segment at 341-641 is putative HTH-type transcriptional regulator; it reads SAVFERIRQM…SHGAAPAAKE (301 aa). The H-T-H motif DNA-binding region spans 377-396; that stretch reads IVDIARKADVSQPTVIRFCR. The SIS domain occupies 461–600; sequence AIDILNNARR…AVGVAIRRAS (140 aa). The helical transmembrane segment at 576 to 596 threads the bilayer; sequence SMISRILHLVMIDILAVGVAI.

In the N-terminal section; belongs to the bacterial glucokinase family.

It is found in the membrane. The catalysed reaction is D-glucose + ATP = D-glucose 6-phosphate + ADP + H(+). This Burkholderia thailandensis (strain ATCC 700388 / DSM 13276 / CCUG 48851 / CIP 106301 / E264) protein is Bifunctional protein glk (glk).